The primary structure comprises 421 residues: MLKAVILIGGPQKGTRFRPLSFEVPKPLFPVAGVPMVQHHIEACSKVPNLKEILLIGFYQPNEALSSFLLKAQQEFKVAIRYLQEYSALGTGGGIYHFRDQILSGGPQAFFVMNADVCSAFPLVPMLDFHKQHGGSQSYVILGTTANRSQSLNYGCIVANGETQEVLHYVEKPGTFVSDIINCGIYLFSPSIFQHIAEVFQRNQQELQLEENSSWQRTEVIRLEQDVFTTLAGRGKLYVYKTEGCWSQIKSAGSAIYASRLYLSQYGSTHPERLASTKEGGPTIRGNVYIHPTANVDPSAVLGPNVSIGMGVTVGAGVRIRESIVLHGAVLQDHSCVLNTIVGWDSTVGRWARVEGTPSDPNPNDPYSKIDSETLFREGKLTPSITILGCNVSIPAEVVILNSIVLPHKELSRSFKNQIIL.

Residues 2–252 (LKAVILIGGP…EGCWSQIKSA (251 aa)) are substrate-binding domain. GDP-alpha-D-mannose-binding residues include Glu85 and Gln248. The segment at 274-421 (LASTKEGGPT…SRSFKNQIIL (148 aa)) is hexapeptide repeat domain. The tract at residues 357-385 (TPSDPNPNDPYSKIDSETLFREGKLTPSI) is C-loop.

This sequence belongs to the transferase hexapeptide repeat family. In terms of assembly, component of the GMPPA-GMPPB mannose-1-phosphate guanylyltransferase complex composed of 4 gmppa subunits and 8 gmppb subunits; the complex is organized into three layers, a central layer made up of 2 gmppa dimers sandwiched between two layers each made up of 2 gmppb dimers.

The protein localises to the cytoplasm. In terms of biological role, regulatory subunit of the GMPPA-GMPPB mannose-1-phosphate guanylyltransferase complex; reduces the catalytic activity of GMPPB when part of the complex. Mediates allosteric feedback inhibition of GMPPB catalytic activity upon binding GDP-alpha-D-mannose. Together with GMPPB regulates GDP-alpha-D-mannose levels. This chain is Mannose-1-phosphate guanylyltransferase regulatory subunit alpha (gmppa), found in Xenopus tropicalis (Western clawed frog).